We begin with the raw amino-acid sequence, 436 residues long: Cytochrome b5-related protein (436 aa).

The Cytochrome b5 heme-binding domain maps to 16–100 (PTYRNSALIT…IAKYKVRDAA (85 aa)). Heme contacts are provided by His59 and His82.

As to expression, muscle.

Functionally, may play a role in muscle cell metabolism. The sequence is that of Cytochrome b5-related protein (Cyt-b5-r) from Drosophila melanogaster (Fruit fly).